The sequence spans 65 residues: UPF0434 protein RPB_0294 (65 aa).

This sequence belongs to the UPF0434 family.

In Rhodopseudomonas palustris (strain HaA2), this protein is UPF0434 protein RPB_0294.